A 447-amino-acid polypeptide reads, in one-letter code: GTPase Der (447 aa).

2 EngA-type G domains span residues 4 to 165 (QIIT…PEEE) and 180 to 357 (LQIV…KIWN). GTP-binding positions include 10-17 (GRPNVGKS), 57-61 (DTPGL), 119-122 (NKCE), 186-193 (GRPNAGKS), 233-237 (DTAGL), and 298-301 (NKWD). A KH-like domain is found at 358–443 (KKITTSKLNE…PIRFTYVKTK (86 aa)).

This sequence belongs to the TRAFAC class TrmE-Era-EngA-EngB-Septin-like GTPase superfamily. EngA (Der) GTPase family. As to quaternary structure, associates with the 50S ribosomal subunit.

Functionally, GTPase that plays an essential role in the late steps of ribosome biogenesis. The protein is GTPase Der of Rickettsia rickettsii (strain Iowa).